The following is a 661-amino-acid chain: Galactan 5-O-arabinofuranosyltransferase (661 aa).

A run of 13 helical transmembrane segments spans residues 26 to 46 (LVAI…LWMG), 64 to 84 (VASA…WLWL), 108 to 128 (ALTY…VLAI), 194 to 214 (AFQP…VPVW), 217 to 237 (ITGS…IILA), 243 to 263 (PYAA…SRIA), 265 to 285 (GDKF…TFYT), 286 to 306 (LFTG…AAIV), 312 to 332 (PLLW…ISWG), 362 to 382 (VPFL…IYLV), 393 to 413 (MWVG…ITLL), 418 to 438 (LGFR…VLGI), and 458 to 478 (TATH…LYYA).

The protein belongs to the glycosyltransferase 85 family.

It is found in the cell membrane. It carries out the reaction Adds an alpha-D-arabinofuranosyl group from trans,octacis-decaprenylphospho-beta-D-arabinofuranose at the 5-O-position of the eighth, tenth and twelfth galactofuranose unit of the galactofuranan chain of [beta-D-galactofuranosyl-(1-&gt;5)-beta-D-galactofuranosyl-(1-&gt;6)]14-beta-D-galactofuranosyl-(1-&gt;5)-beta-D-galactofuranosyl-(1-&gt;4)-alpha-L-rhamnopyranosyl-(1-&gt;3)-N-acetyl-alpha-D-glucosaminyl-diphospho-trans,octacis-decaprenol.. It functions in the pathway cell wall biogenesis; cell wall polysaccharide biosynthesis. Its function is as follows. Involved in the biosynthesis of the arabinogalactan (AG) region of the mycolylarabinogalactan-peptidoglycan (mAGP) complex, an essential component of the cell wall. Catalyzes the addition of the first key arabinofuranosyl (Araf) residue from the sugar donor decaprenyl-phospho-arabinose (DPA) on the C-5 of a 6-linked galactofuranosyl (Galf) of the galactan domain, thus 'priming' the galactan for further elaboration by other arabinofuranosyltransferases. The polypeptide is Galactan 5-O-arabinofuranosyltransferase (Corynebacterium glutamicum (strain ATCC 13032 / DSM 20300 / JCM 1318 / BCRC 11384 / CCUG 27702 / LMG 3730 / NBRC 12168 / NCIMB 10025 / NRRL B-2784 / 534)).